The sequence spans 68 residues: Sec-independent protein translocase protein TatA (68 aa).

Residues 1-21 form a helical membrane-spanning segment; that stretch reads MGSFSIWHWLIVLAVVLLLFG. A disordered region spans residues 48–68; the sequence is AAAADKSIDGKTVDHKSDEVR. The span at 53–68 shows a compositional bias: basic and acidic residues; sequence KSIDGKTVDHKSDEVR.

This sequence belongs to the TatA/E family. As to quaternary structure, the Tat system comprises two distinct complexes: a TatABC complex, containing multiple copies of TatA, TatB and TatC subunits, and a separate TatA complex, containing only TatA subunits. Substrates initially bind to the TatABC complex, which probably triggers association of the separate TatA complex to form the active translocon.

The protein resides in the cell inner membrane. Its function is as follows. Part of the twin-arginine translocation (Tat) system that transports large folded proteins containing a characteristic twin-arginine motif in their signal peptide across membranes. TatA could form the protein-conducting channel of the Tat system. The sequence is that of Sec-independent protein translocase protein TatA from Sinorhizobium medicae (strain WSM419) (Ensifer medicae).